The primary structure comprises 178 residues: Interleukin-10 (178 aa).

Residues Met1–Ala18 form the signal peptide. Asn29 carries N-linked (GlcNAc...) asparagine glycosylation. Disulfide bonds link Cys30–Cys126 and Cys80–Cys132. Asn134 carries N-linked (GlcNAc...) asparagine glycosylation.

Belongs to the IL-10 family. As to quaternary structure, homodimer. Interacts with IL10RA and IL10RB.

The protein localises to the secreted. Functionally, major immune regulatory cytokine that acts on many cells of the immune system where it has profound anti-inflammatory functions, limiting excessive tissue disruption caused by inflammation. Mechanistically, IL10 binds to its heterotetrameric receptor comprising IL10RA and IL10RB leading to JAK1 and STAT2-mediated phosphorylation of STAT3. In turn, STAT3 translocates to the nucleus where it drives expression of anti-inflammatory mediators. Targets antigen-presenting cells (APCs) such as macrophages and monocytes and inhibits their release of pro-inflammatory cytokines including granulocyte-macrophage colony-stimulating factor /GM-CSF, granulocyte colony-stimulating factor/G-CSF, IL-1 alpha, IL-1 beta, IL-6, IL-8 and TNF-alpha. Also interferes with antigen presentation by reducing the expression of MHC-class II and co-stimulatory molecules, thereby inhibiting their ability to induce T cell activation. In addition, controls the inflammatory response of macrophages by reprogramming essential metabolic pathways including mTOR signaling. This is Interleukin-10 (IL10) from Felis catus (Cat).